Here is a 432-residue protein sequence, read N- to C-terminus: Ciliated left-right organizer protein containing ZP-N domains homolog (432 aa).

In terms of tissue distribution, expressed specifically by cells of the ciliated left-right organizer.

The sequence is that of Ciliated left-right organizer protein containing ZP-N domains homolog (ciroz) from Danio rerio (Zebrafish).